A 332-amino-acid chain; its full sequence is Fructose-1,6-bisphosphatase class 1 (332 aa).

Residues Glu-89, Asp-110, Leu-112, and Asp-113 each coordinate Mg(2+). Substrate contacts are provided by residues 113 to 116 (DGSS), Asn-206, Tyr-239, 257 to 259 (YLY), and Lys-269. A Mg(2+)-binding site is contributed by Glu-275.

It belongs to the FBPase class 1 family. Homotetramer. Mg(2+) is required as a cofactor.

The protein resides in the cytoplasm. The catalysed reaction is beta-D-fructose 1,6-bisphosphate + H2O = beta-D-fructose 6-phosphate + phosphate. It functions in the pathway carbohydrate biosynthesis; gluconeogenesis. The sequence is that of Fructose-1,6-bisphosphatase class 1 from Salmonella typhi.